The following is an 83-amino-acid chain: Putative defensin-like protein 150 (83 aa).

The signal sequence occupies residues 1–25; sequence MMGKHIQLSFAILIMFTIFVLGAVG. 4 disulfides stabilise this stretch: Cys35–Cys83, Cys44–Cys64, Cys49–Cys77, and Cys53–Cys79.

Belongs to the DEFL family.

It is found in the secreted. This is Putative defensin-like protein 150 (LCR32) from Arabidopsis thaliana (Mouse-ear cress).